A 526-amino-acid polypeptide reads, in one-letter code: Delayed-rectifier potassium channel regulatory subunit KCNS1 (526 aa).

The Cytoplasmic portion of the chain corresponds to 1 to 217 (MLMLLVRGTH…LTMENPGYSL (217 aa)). The helical transmembrane segment at 218–239 (PSKLFSCVSISVVLASIAAMCI) threads the bilayer. Over 240-270 (HSLPEYQAREAAAAVAAVAAGRSPEGVRDDP) the chain is Extracellular. A helical transmembrane segment spans residues 271–293 (VLRRLEYFCIAWFSFEVSSRLLL). The Cytoplasmic portion of the chain corresponds to 294–304 (APSTRNFFCHP). A helical membrane pass occupies residues 305–322 (LNLIDIVSVLPFYLTLLA). At 323–337 (GVALGDQGGKEFGHL) the chain is on the extracellular side. The chain crosses the membrane as a helical; Voltage-sensor span at residues 338 to 358 (GKVVQVFRLMRIFRVLKLARH). Topologically, residues 359–373 (STGLRSLGATLKHSY) are cytoplasmic. A helical membrane pass occupies residues 374-395 (REVGILLLYLAVGVSVFSGVAY). Residues 396–408 (TAEKEEDVGFNTI) lie on the Extracellular side of the membrane. Residues 409–420 (PACWWWGTVSMT) constitute an intramembrane region (helical). The short motif at 421–426 (TVGYGD) is the Selectivity filter element. Residues 421 to 428 (TVGYGDVV) lie within the membrane without spanning it. Topologically, residues 429 to 435 (PVTVAGK) are extracellular. A helical transmembrane segment spans residues 436-464 (LAASGCILGGILVVALPITIIFNKFSHFY). The Cytoplasmic portion of the chain corresponds to 465-526 (RRQKALEAAV…PSEPPHPQMY (62 aa)). Residues 491–526 (GVSEASLETSRETSQEGRSADLESQAPSEPPHPQMY) are disordered. Basic and acidic residues predominate over residues 499 to 511 (TSRETSQEGRSAD).

This sequence belongs to the potassium channel family. S (TC 1.A.1.2) subfamily. Kv9.1/KCNS1 sub-subfamily. Heterotetramer with KCNB1. Heterotetramer with KCNB2. Does not form homomultimers.

The protein resides in the cell membrane. Functionally, potassium channel regulatory subunit that modulate the delayed rectifier voltage-gated potassium channel activity of KCNB1 and KCNB2 by altering their kinetics, expression levels, and shifting the half-inactivation potential to more polarized values. While it does not form functional channels on its own, it can form functional heterotetrameric channels with KCNB1 and KCNB2. Each regulatory subunit has unique regulatory properties that can lead to extensive inhibition, significant changes in kinetics, and/or substantial shifts in the voltage dependencies of the inactivation process. The protein is Delayed-rectifier potassium channel regulatory subunit KCNS1 of Pongo abelii (Sumatran orangutan).